The sequence spans 178 residues: Probable chorismate pyruvate-lyase (178 aa).

Residues R73, L111, and E163 each coordinate substrate.

This sequence belongs to the UbiC family.

The protein resides in the cytoplasm. The catalysed reaction is chorismate = 4-hydroxybenzoate + pyruvate. Its pathway is cofactor biosynthesis; ubiquinone biosynthesis. Removes the pyruvyl group from chorismate, with concomitant aromatization of the ring, to provide 4-hydroxybenzoate (4HB) for the ubiquinone pathway. This is Probable chorismate pyruvate-lyase from Pseudomonas aeruginosa (strain ATCC 15692 / DSM 22644 / CIP 104116 / JCM 14847 / LMG 12228 / 1C / PRS 101 / PAO1).